Reading from the N-terminus, the 480-residue chain is Glycogen synthase 1 (480 aa).

Lysine 15 contacts ADP-alpha-D-glucose.

This sequence belongs to the glycosyltransferase 1 family. Bacterial/plant glycogen synthase subfamily.

It catalyses the reaction [(1-&gt;4)-alpha-D-glucosyl](n) + ADP-alpha-D-glucose = [(1-&gt;4)-alpha-D-glucosyl](n+1) + ADP + H(+). It functions in the pathway glycan biosynthesis; glycogen biosynthesis. Functionally, synthesizes alpha-1,4-glucan chains using ADP-glucose. The sequence is that of Glycogen synthase 1 (glgA1) from Rhizobium meliloti (strain 1021) (Ensifer meliloti).